The following is a 265-amino-acid chain: Undecaprenyl-diphosphatase 1 (265 aa).

7 consecutive transmembrane segments (helical) span residues 4–24 (IITAFILGIVEGLAEFLPISS), 42–62 (AKTFEIVIQLGAILAIAILYH), 84–104 (FHVFLGVFPAVVAGLLLHDVI), 108–128 (LFQPYTVVIGLVAGAILMIFA), 184–204 (SEFSFLIALPVMVGATGLDLL), 217–237 (MFAVGFITSFIVAMLAVVTFL), and 245–265 (LKPFAYYRILLAILFTVFVLL).

The protein belongs to the UppP family.

It is found in the cell membrane. It catalyses the reaction di-trans,octa-cis-undecaprenyl diphosphate + H2O = di-trans,octa-cis-undecaprenyl phosphate + phosphate + H(+). In terms of biological role, catalyzes the dephosphorylation of undecaprenyl diphosphate (UPP). Confers resistance to bacitracin. In Bacillus anthracis, this protein is Undecaprenyl-diphosphatase 1.